A 352-amino-acid polypeptide reads, in one-letter code: Protein NDRG4 (352 aa).

Lysine 293, serine 298, serine 317, and serine 323 each carry phosphoserine. Residues 301 to 352 form a disordered region; that stretch reads AVPSASMTRLARSRTASLTSASSVDGSRPQPCAHSDSSEGMGQVNHTMEVSC. The span at 308 to 323 shows a compositional bias: low complexity; it reads TRLARSRTASLTSASS. The segment covering 338–352 has biased composition (polar residues); that stretch reads SEGMGQVNHTMEVSC.

The protein belongs to the NDRG family. Predominantly expressed in the brain (at protein level). Detected in neurons of various parts of brain, including the olfactory bulb, olfactory tuberculum, cerebral cortex, striatum, hippocampus, dentate gyrus, thalamus, hypothalamus, mesencephalon, cerebellum, pons and medulla oblongata.

The protein resides in the cytoplasm. The protein localises to the cytosol. Contributes to the maintenance of intracerebral BDNF levels within the normal range, which is necessary for the preservation of spatial learning and the resistance to neuronal cell death caused by ischemic stress. May enhance growth factor-induced ERK1 and ERK2 phosphorylation. May attenuate NGF-promoted ELK1 phosphorylation in a microtubule-dependent manner. This is Protein NDRG4 (Ndrg4) from Mus musculus (Mouse).